The following is a 173-amino-acid chain: MSKWLNVGKIVNTHGVRGEVRVLSTTDFEDDRFSSGKTLYVMRPNQNERVAVTVASHRKHKNFDLLCFEGYPSINDVEAFKGGRLQVPIEDRPELGEGEFFYHEIIGCSVVTIAGEELGKVKEILSPGANDVWVVQCRRGGKDLLIPYIEQVVKQVDLEKQQITIEPMEGLLE.

The 75-residue stretch at 97-171 (EGEFFYHEII…QITIEPMEGL (75 aa)) folds into the PRC barrel domain.

Belongs to the RimM family. As to quaternary structure, binds ribosomal protein uS19.

It is found in the cytoplasm. Its function is as follows. An accessory protein needed during the final step in the assembly of 30S ribosomal subunit, possibly for assembly of the head region. Essential for efficient processing of 16S rRNA. May be needed both before and after RbfA during the maturation of 16S rRNA. It has affinity for free ribosomal 30S subunits but not for 70S ribosomes. In Halalkalibacterium halodurans (strain ATCC BAA-125 / DSM 18197 / FERM 7344 / JCM 9153 / C-125) (Bacillus halodurans), this protein is Ribosome maturation factor RimM.